The primary structure comprises 111 residues: MKDPYDVIKRHYVTEKAKTLEGLSLGNGEGKKKGSFCKHPKYTFVVSCDATKPLIAQALESIYADKKVKVKSVNTICVKPQPARMFRGKRKGKTAGFKKAVVTFYEGHSIG.

It belongs to the universal ribosomal protein uL23 family. Part of the 50S ribosomal subunit. Contacts protein L29, and trigger factor when it is bound to the ribosome.

One of the early assembly proteins it binds 23S rRNA. One of the proteins that surrounds the polypeptide exit tunnel on the outside of the ribosome. Forms the main docking site for trigger factor binding to the ribosome. The chain is Large ribosomal subunit protein uL23 from Chlamydia caviae (strain ATCC VR-813 / DSM 19441 / 03DC25 / GPIC) (Chlamydophila caviae).